Consider the following 83-residue polypeptide: Mu-theraphotoxin-Hhn2j 4 (83 aa).

Residues 1–21 (MKASMFLALAGSVLLFVVGYA) form the signal peptide. Residues 22–48 (SESEEKEFPIELLSKIFAVDVFKGEER) constitute a propeptide that is removed on maturation. Intrachain disulfides connect C50–C65, C57–C70, and C64–C77. A Leucine amide modification is found at L81.

It belongs to the neurotoxin 10 (Hwtx-1) family. 15 (Hntx-3) subfamily. In terms of assembly, monomer. Expressed by the venom gland.

The protein localises to the secreted. Functionally, lethal neurotoxin. Selectively blocks tetrodotoxin-sensitive voltage-gated sodium channels (Nav). Does not affect tetrodotoxin-resistant voltage-gated sodium channels or calcium channels. The chain is Mu-theraphotoxin-Hhn2j 4 from Cyriopagopus hainanus (Chinese bird spider).